The following is a 485-amino-acid chain: GTPase Der (485 aa).

2 EngA-type G domains span residues 3–167 and 176–349; these read PTIA…PEPE and PVFA…NAAM. GTP contacts are provided by residues 9 to 16, 56 to 60, 119 to 122, 182 to 189, 229 to 233, and 294 to 297; these read GRPNVGKS, DTGGF, NKGE, DTAGV, and NKWD. The KH-like domain maps to 350–434; the sequence is IKMPTPKITR…PLRIQYNVSE (85 aa). Residues 435–485 form a disordered region; sequence NPYENAEDKPKKKPLRRVSLSNRIEKREGRKEEKNRFKKKTKVSVKKQFSK. A compositionally biased stretch (basic and acidic residues) spans 457–469; that stretch reads RIEKREGRKEEKN. Residues 470–485 show a composition bias toward basic residues; that stretch reads RFKKKTKVSVKKQFSK.

It belongs to the TRAFAC class TrmE-Era-EngA-EngB-Septin-like GTPase superfamily. EngA (Der) GTPase family. Associates with the 50S ribosomal subunit.

In terms of biological role, GTPase that plays an essential role in the late steps of ribosome biogenesis. In Neisseria gonorrhoeae (strain NCCP11945), this protein is GTPase Der.